The chain runs to 619 residues: Dihydroxy-acid dehydratase (619 aa).

Asp-81 is a Mg(2+) binding site. Cys-122 provides a ligand contact to [2Fe-2S] cluster. Asp-123 and Lys-124 together coordinate Mg(2+). Lys-124 is modified (N6-carboxylysine). Position 195 (Cys-195) interacts with [2Fe-2S] cluster. Residue Glu-492 participates in Mg(2+) binding. Ser-518 (proton acceptor) is an active-site residue.

Belongs to the IlvD/Edd family. Homodimer. [2Fe-2S] cluster is required as a cofactor. Requires Mg(2+) as cofactor.

It catalyses the reaction (2R)-2,3-dihydroxy-3-methylbutanoate = 3-methyl-2-oxobutanoate + H2O. It carries out the reaction (2R,3R)-2,3-dihydroxy-3-methylpentanoate = (S)-3-methyl-2-oxopentanoate + H2O. It functions in the pathway amino-acid biosynthesis; L-isoleucine biosynthesis; L-isoleucine from 2-oxobutanoate: step 3/4. Its pathway is amino-acid biosynthesis; L-valine biosynthesis; L-valine from pyruvate: step 3/4. In terms of biological role, functions in the biosynthesis of branched-chain amino acids. Catalyzes the dehydration of (2R,3R)-2,3-dihydroxy-3-methylpentanoate (2,3-dihydroxy-3-methylvalerate) into 2-oxo-3-methylpentanoate (2-oxo-3-methylvalerate) and of (2R)-2,3-dihydroxy-3-methylbutanoate (2,3-dihydroxyisovalerate) into 2-oxo-3-methylbutanoate (2-oxoisovalerate), the penultimate precursor to L-isoleucine and L-valine, respectively. In Synechococcus elongatus (strain ATCC 33912 / PCC 7942 / FACHB-805) (Anacystis nidulans R2), this protein is Dihydroxy-acid dehydratase.